We begin with the raw amino-acid sequence, 452 residues long: Probable ECA polymerase (452 aa).

11 helical membrane passes run 6 to 26 (FSGLLVVWLLSTLFIATLTWF), 37 to 57 (VFFSLLFLLTFFFGFPLTSVL), 63 to 83 (VGVAPPEILLQALLSAACFYG), 118 to 138 (VILMGIALVSVAIFFMHNGFL), 155 to 175 (GVALKRFFYFFIPAMLVVYFL), 181 to 201 (AWLFFLVSTVAFGLLTYMIVG), 207 to 227 (IIIAFAIFLFIGIIRGWISLW), 228 to 248 (MLAAAGVLGIVGMFWLALKRY), 341 to 361 (LVVMGGALFIPLGAIVVGLII), 378 to 398 (YKAAILHSFCFGAIFNMIVLV), and 410 to 430 (VFFLVVFGASLLVAKLLFWLF).

This sequence belongs to the WzyE family. In terms of assembly, probably part of a complex composed of WzxE, WzyE and WzzE.

It localises to the cell inner membrane. The protein operates within bacterial outer membrane biogenesis; enterobacterial common antigen biosynthesis. Functionally, probably involved in the polymerization of enterobacterial common antigen (ECA) trisaccharide repeat units. This is Probable ECA polymerase from Salmonella gallinarum (strain 287/91 / NCTC 13346).